The following is a 66-amino-acid chain: Large ribosomal subunit protein bL31 (66 aa).

Zn(2+) is bound by residues C16, C18, C36, and C39.

It belongs to the bacterial ribosomal protein bL31 family. Type A subfamily. Part of the 50S ribosomal subunit. Requires Zn(2+) as cofactor.

Binds the 23S rRNA. This chain is Large ribosomal subunit protein bL31, found in Geobacillus thermodenitrificans (strain NG80-2).